The chain runs to 689 residues: DNA ligase (689 aa).

Residues 35–39 (DEVYD), 84–85 (SL), and Glu-122 each bind NAD(+). Lys-124 functions as the N6-AMP-lysine intermediate in the catalytic mechanism. NAD(+)-binding residues include Arg-145, Glu-182, Lys-308, and Lys-332. Positions 426, 429, 444, and 449 each coordinate Zn(2+). The region spanning 612–689 (TTEKSLNGKR…NETELIQMCR (78 aa)) is the BRCT domain.

Belongs to the NAD-dependent DNA ligase family. LigA subfamily. Mg(2+) is required as a cofactor. Requires Mn(2+) as cofactor.

The enzyme catalyses NAD(+) + (deoxyribonucleotide)n-3'-hydroxyl + 5'-phospho-(deoxyribonucleotide)m = (deoxyribonucleotide)n+m + AMP + beta-nicotinamide D-nucleotide.. In terms of biological role, DNA ligase that catalyzes the formation of phosphodiester linkages between 5'-phosphoryl and 3'-hydroxyl groups in double-stranded DNA using NAD as a coenzyme and as the energy source for the reaction. It is essential for DNA replication and repair of damaged DNA. The sequence is that of DNA ligase from Thermosynechococcus vestitus (strain NIES-2133 / IAM M-273 / BP-1).